The following is a 426-amino-acid chain: Histone deacetylase 9 (426 aa).

The segment at 6 to 318 is histone deacetylase; it reads KISYFYDGDV…WTVETGILLD (313 aa). The active-site Proton donor/acceptor is histidine 137. Positions 172, 174, and 261 each coordinate Zn(2+). The tract at residues 383-426 is disordered; the sequence is PDFYIPDFDEDEQNPDVRADQRSRDKQIQRDDEYFDGDNDNDAS. Over residues 397 to 414 the composition is skewed to basic and acidic residues; it reads PDVRADQRSRDKQIQRDD. Positions 415 to 426 are enriched in acidic residues; that stretch reads EYFDGDNDNDAS.

The protein belongs to the histone deacetylase family. HD type 1 subfamily. As to quaternary structure, interacts with AHL22. Binds to farnesylated ASG2 in the cytosol. Requires Zn(2+) as cofactor.

The protein localises to the nucleus. The protein resides in the cytoplasm. It is found in the cytosol. It carries out the reaction N(6)-acetyl-L-lysyl-[histone] + H2O = L-lysyl-[histone] + acetate. Its function is as follows. Responsible for the deacetylation of lysine residues on the N-terminal part of the core histones (H2A, H2B, H3 and H4). Histone deacetylation gives a tag for epigenetic repression and plays an important role in transcriptional regulation, cell cycle progression and developmental events. Histone deacetylases act via the formation of large multiprotein complexes. The polypeptide is Histone deacetylase 9 (HDA9) (Arabidopsis thaliana (Mouse-ear cress)).